The chain runs to 155 residues: Myelin basic protein (155 aa).

The disordered stretch occupies residues 1 to 72 (MASATTSDHA…HQGARRQTDD (72 aa)). Ala2 carries the post-translational modification N-acetylalanine; in forms C1, C2, C3 and C8. Deamidated glutamine; in forms C1, C2 and C3 is present on Gln12. The span at 37 to 49 (GSRKVPEKGKEPA) shows a compositional bias: basic and acidic residues. Residues Ser73 and Ser84 each carry the phosphoserine; in forms C1, C2 and C3 modification. A disordered region spans residues 113-155 (RAHYGAAGSSKSKDGFRGRRDGSGTLSSFFKMGKKGEGSPARR). Phosphoserine; in forms C1 and C3 is present on residues Ser121 and Ser122. Positions 123–134 (KSKDGFRGRRDG) are enriched in basic and acidic residues. Ser135, Ser139, and Ser140 each carry phosphoserine; in forms C1, C2 and C3.

Belongs to the myelin basic protein family. Several charge isomers are produced as a result of optional post-translational modifications, such as phosphorylation, deamidation and citrullination. Dogfish MBP contains four major components designated as C1, C2, C3 and C8. C1 and C3, but not C2 are phosphorylated at either Ser-121 or Ser-122; C2 is phosphorylated at 2 or 3 sites among Ser-135, Ser-139 and Ser-140. Hydroxyproline and citrulline are present but were not identified in either C1, C2 or C3, which suggests their presence in C8.

Its subcellular location is the myelin membrane. Functionally, this protein may function to maintain proper structure of myelin. The chain is Myelin basic protein (MBP) from Squalus acanthias (Spiny dogfish).